The chain runs to 161 residues: 3-hydroxyacyl-[acyl-carrier-protein] dehydratase FabZ (161 aa).

His-55 is an active-site residue.

It belongs to the thioester dehydratase family. FabZ subfamily.

The protein localises to the cytoplasm. The enzyme catalyses a (3R)-hydroxyacyl-[ACP] = a (2E)-enoyl-[ACP] + H2O. Functionally, involved in unsaturated fatty acids biosynthesis. Catalyzes the dehydration of short chain beta-hydroxyacyl-ACPs and long chain saturated and unsaturated beta-hydroxyacyl-ACPs. The protein is 3-hydroxyacyl-[acyl-carrier-protein] dehydratase FabZ of Jannaschia sp. (strain CCS1).